We begin with the raw amino-acid sequence, 209 residues long: MIAIIDYGMGNIRSVEQALKYIGAEYIVTSDKKEILRSDGVILPGVGAFPKAMDVLEERDLVCVLKEVCDIGKPLLGICLGMQLLFERSEELKDCSGLGLLPGEIRKLKVSYKIPHMGWNELRKEREFPLWNGLVDGSFVYYVHSYYADCPDEIVCGVSDYGMQVPGFVAKGNVFGAQFHPEKSGEIGMQILKNFQGVVEAWKSSQLSI.

The Glutamine amidotransferase type-1 domain occupies 1–205 (MIAIIDYGMG…QGVVEAWKSS (205 aa)). C79 serves as the catalytic Nucleophile. Catalysis depends on residues H180 and E182.

As to quaternary structure, heterodimer of HisH and HisF.

It is found in the cytoplasm. The enzyme catalyses 5-[(5-phospho-1-deoxy-D-ribulos-1-ylimino)methylamino]-1-(5-phospho-beta-D-ribosyl)imidazole-4-carboxamide + L-glutamine = D-erythro-1-(imidazol-4-yl)glycerol 3-phosphate + 5-amino-1-(5-phospho-beta-D-ribosyl)imidazole-4-carboxamide + L-glutamate + H(+). It carries out the reaction L-glutamine + H2O = L-glutamate + NH4(+). It functions in the pathway amino-acid biosynthesis; L-histidine biosynthesis; L-histidine from 5-phospho-alpha-D-ribose 1-diphosphate: step 5/9. Its function is as follows. IGPS catalyzes the conversion of PRFAR and glutamine to IGP, AICAR and glutamate. The HisH subunit catalyzes the hydrolysis of glutamine to glutamate and ammonia as part of the synthesis of IGP and AICAR. The resulting ammonia molecule is channeled to the active site of HisF. In Bacillus cereus (strain ATCC 14579 / DSM 31 / CCUG 7414 / JCM 2152 / NBRC 15305 / NCIMB 9373 / NCTC 2599 / NRRL B-3711), this protein is Imidazole glycerol phosphate synthase subunit HisH.